The chain runs to 108 residues: Protein YcgL (108 aa).

The YcgL domain maps to 12-96 (MFCVIYRSSK…PPEDLLKQHL (85 aa)).

The protein is Protein YcgL of Escherichia coli O17:K52:H18 (strain UMN026 / ExPEC).